The following is a 1367-amino-acid chain: Histone acetyltransferase HAC2 (1367 aa).

Residues 110–151 form a disordered region; it reads TSSIPGSSGSASETNSGSDITKQDFKNDSPSDSKKVQGSSTS. Residues 111-127 are compositionally biased toward low complexity; that stretch reads SSIPGSSGSASETNSGS. The span at 130 to 144 shows a compositional bias: basic and acidic residues; it reads TKQDFKNDSPSDSKK. 12 consecutive repeat copies span residues 188–200, 223–235, 251–263, 286–298, 314–326, 349–361, 377–389, 418–430, 432–444, 459–471, 473–485, and 500–512. Positions 188-512 are 12 X 13 AA approximate repeats; sequence KLGTVVDIVE…IGVDIVEPMK (325 aa). The PHD-type zinc finger occupies 688–765; it reads HQICSPCHSR…EYICPTCLLE (78 aa). The 434-residue stretch at 780–1213 folds into the CBP/p300-type HAT domain; that stretch reads DSGAKDLPET…ILHHLHTSNK (434 aa). Residues 903–905, 922–923, and W978 contribute to the acetyl-CoA site; these read LDS and RT. The segment at 1094–1157 adopts a ZZ-type 1; degenerate zinc-finger fold; it reads ELNYSCTRCS…QLSKVQVNGV (64 aa). Residues C1099, C1102, C1123, C1126, C1225, C1228, C1240, C1243, C1249, C1252, H1261, and H1263 each coordinate Zn(2+). The ZZ-type 2 zinc-finger motif lies at 1220 to 1273; the sequence is SSSLTCTACKKDVSTTIYFPCLLCPDYRACTGCYTKNRTLRHLHIFPTLPSANR. Residues 1274 to 1359 form a TAZ-type zinc finger; sequence APSRTVMVLE…NCPVPQCRDR (86 aa).

As to expression, rosette leaves, stems and flowers.

It is found in the nucleus. It carries out the reaction L-lysyl-[protein] + acetyl-CoA = N(6)-acetyl-L-lysyl-[protein] + CoA + H(+). Functionally, acetyltransferase enzyme. Acetylates histones, giving a specific tag for transcriptional activation. No acetyltransferase activity found in vitro. This is Histone acetyltransferase HAC2 (HAC2) from Arabidopsis thaliana (Mouse-ear cress).